The sequence spans 189 residues: Cyclin-dependent kinase inhibitor 5 (189 aa).

Residues 73-93 are compositionally biased toward polar residues; the sequence is KQQKQQLIPSVNQCQTKNPRA. Residues 73-107 form a disordered region; the sequence is KQQKQQLIPSVNQCQTKNPRASSGPAKKLEPDTTT.

This sequence belongs to the CDI family. ICK/KRP subfamily. As to quaternary structure, interacts with CYCD4-1. Does not interact with CDKA-1. In terms of tissue distribution, expressed in flowers and at lower levels in roots and leaves.

The protein localises to the nucleus. It localises to the nucleoplasm. Functionally, inhibits CYCD2-1/CDKA-1 complex kinase activity without interaction with the complex. This Arabidopsis thaliana (Mouse-ear cress) protein is Cyclin-dependent kinase inhibitor 5 (KRP5).